A 359-amino-acid chain; its full sequence is Doublesex- and mab-3-related transcription factor B1 (359 aa).

The DM DNA-binding region spans 7–54; sequence CSRCRNHGYLVPVKGHTGKCRWKQCICDKCYLITERQKIMAAQKVLRT. Disordered stretches follow at residues 111-149 and 262-359; these read PPQAPSPGPSTFQLGPSGRPGPSTFQPGPGAPGGLRDRS and SGLV…EQSN. 2 stretches are compositionally biased toward pro residues: residues 277–299 and 315–325; these read CSPPPPPPPPPPPPLPAPPPQPQ and LPPPPPPPSPP. Over residues 348–359 the composition is skewed to polar residues; it reads EPSQDSPQEQSN.

The protein belongs to the DMRT family. Brain.

It localises to the nucleus. This Mus musculus (Mouse) protein is Doublesex- and mab-3-related transcription factor B1 (Dmrtb1).